A 523-amino-acid chain; its full sequence is ADP-ribosylation factor GTPase-activating protein 3 (523 aa).

The Arf-GAP domain occupies 10–126 (LAIFKRLRSV…IKTLATQATR (117 aa)). The C4-type zinc finger occupies 25–48 (CFDCGAKNPSWASISYGVFLCIDC). A disordered region spans residues 162-206 (GAMQASAQPESASSTPWGLETTPEKHEGGPGQGPSVEGLNTPGKA). Residues 164–177 (MQASAQPESASSTP) are compositionally biased toward polar residues. Phosphoserine is present on residues S231 and S241. The interval 248–269 (QAQAVDKRKEQEDLARGAPKEE) is disordered. A phosphoserine mark is found at S270, S274, and S331. Residues 308–424 (GFGSCRSGIS…YEPIGSTDEA (117 aa)) form a disordered region. Residues 314–332 (SGISHSVTSDMQTIEQESP) are compositionally biased toward polar residues. A compositionally biased stretch (low complexity) spans 348 to 361 (SYFSSSSKWSEQSS). Position 377 is a phosphoserine (S377). Residues 385–396 (YWKKDSSRDPEP) show a composition bias toward basic and acidic residues. Phosphoserine is present on residues S435, S458, S460, S462, S464, and S465.

It is found in the cytoplasm. The protein resides in the golgi apparatus membrane. With respect to regulation, GAP activity stimulated by phosphatidylinositol 4,5-bisphosphate (PIP2). Functionally, GTPase-activating protein (GAP) for ADP ribosylation factor 1 (ARF1). Hydrolysis of ARF1-bound GTP may lead to dissociation of coatomer from Golgi-derived membranes to allow fusion with target membranes. The sequence is that of ADP-ribosylation factor GTPase-activating protein 3 (Arfgap3) from Mus musculus (Mouse).